The following is a 544-amino-acid chain: High affinity immunoglobulin alpha and immunoglobulin mu Fc receptor (544 aa).

The signal sequence occupies residues 1–16 (MPLFLILCLLQGSSFA). Over 17–462 (LPQKRPHPRW…TFPEDESSSR (446 aa)) the chain is Extracellular. In terms of domain architecture, Ig-like V-type spans 61–169 (PNALKGSRLV…NMLFLSMNLT (109 aa)). Residues 75–97 (GGAVTIQCHYAPSSVNRHQRKYW) form a mediates immunoglobulin Fc fragment-binding region. Cysteine 82 and cysteine 153 are joined by a disulfide. N-linked (GlcNAc...) asparagine glycosylation occurs at asparagine 167. Positions 218–325 (DTVASTPGTS…TTKADRPRED (108 aa)) are disordered. 2 stretches are compositionally biased toward polar residues: residues 220-232 (VAST…TTAS) and 280-291 (ASKSRSMSNTTE). Positions 307 to 325 (ASKDRREITTTKADRPRED) are enriched in basic and acidic residues. Residues 463–483 (TLAPVSTMLALFMLMALVLLQ) traverse the membrane as a helical segment. Residues 484 to 544 (RKLRRRRTSQ…LTAPERNPGP (61 aa)) are Cytoplasmic-facing. The segment at 511-544 (PQPDQLPHVERKMLQDDSLPAGASLTAPERNPGP) is disordered.

As to quaternary structure, interacts with IGHM; this interaction facilitates the endocytosis of IgM-coated microbes or IgM-antigen immune complexes. N-glycosylated.

It localises to the cell membrane. In terms of biological role, functions as a receptor for the Fc fragment of IgA and IgM. Binds IgA and IgM with high affinity and mediates their endocytosis. May function in the immune response to microbes mediated by IgA and IgM. The chain is High affinity immunoglobulin alpha and immunoglobulin mu Fc receptor (FCAMR) from Pongo abelii (Sumatran orangutan).